Here is a 624-residue protein sequence, read N- to C-terminus: DNA-directed RNA polymerase III subunit rpc-3 (624 aa).

2 disordered regions span residues 229–260 (KRKL…EEDL) and 373–418 (LAPK…ARMS). Positions 385-403 (DDSDDDEEDGDYSDSDEEM) are enriched in acidic residues. Residues 551 to 572 (CYATMVHCLQVLEVRRQKDKDV) form a leucine-zipper region.

This sequence belongs to the RNA polymerase beta chain family. In terms of assembly, component of the RNA polymerase III (Pol III) complex consisting of 17 subunits.

It localises to the nucleus. Its function is as follows. DNA-dependent RNA polymerase catalyzes the transcription of DNA into RNA using the four ribonucleoside triphosphates as substrates. Specific core component of RNA polymerase III which synthesizes small RNAs, such as 5S rRNA and tRNAs. In Neurospora crassa (strain ATCC 24698 / 74-OR23-1A / CBS 708.71 / DSM 1257 / FGSC 987), this protein is DNA-directed RNA polymerase III subunit rpc-3 (rpc-82).